We begin with the raw amino-acid sequence, 780 residues long: Lethal(3)malignant brain tumor-like protein 3 (780 aa).

The tract at residues 1–64 (MTESASSTSG…VKKATATTTW (64 aa)) is interaction with RBPJ. Required for transcription repressor activity on Notch target genes. The tract at residues 149 to 220 (DKDQKEERDV…RKRRGDSAVL (72 aa)) is disordered. Composition is skewed to acidic residues over residues 157–166 (DVEEDNEEED) and 185–194 (EDGEERDDEM). MBT repeat units follow at residues 232–332 (WCWA…LHPP), 340–439 (FNWQ…LITP), and 448–543 (FSWD…LQPP). The CCHHC-type; degenerate zinc-finger motif lies at 549–593 (LMEASEHGGCSTPGCKGIGHFKRARHLGPHSAANCPYSEINLNKD). A disordered region spans residues 597–665 (PDRLSGEMPP…GAREEPTVQQ (69 aa)). The tract at residues 600–710 (LSGEMPPASP…PASKVSKWST (111 aa)) is interaction with DCAF5. Phosphoserine is present on Ser608. Residue Lys637 forms a Glycyl lysine isopeptide (Lys-Gly) (interchain with G-Cter in SUMO2) linkage. Residues 643-661 (RTESEMRTSHEARGAREEP) are compositionally biased toward basic and acidic residues. A Glycyl lysine isopeptide (Lys-Gly) (interchain with G-Cter in SUMO2) cross-link involves residue Lys704. The region spanning 708–772 (WSTDEVSEFI…FNSILMFKAA (65 aa)) is the SAM domain.

As to quaternary structure, interacts with RNF2. Interacts (via SAM domain) with SAMD1 (via SAM domain); the interaction mediates L3MBTL3 binding to chromatin. Interacts with RBPJ; the interaction is required for L3MBTL3 localization to chromatin and is impaired by Notch-derived peptides containing the intracellular domain (NICD). Interacts (via SAM domain) with KDM1A. Interacts with DCAF5. Interacts with DNMT1. Interacts with E2F1. Interacts with SOX2. Interacts with SFMBT1.

Its subcellular location is the nucleus. Its function is as follows. Is a negative regulator of Notch target genes expression, required for RBPJ-mediated transcriptional repression. It recruits KDM1A to Notch-responsive elements and promotes KDM1A-mediated H3K4me demethylation. Involved in the regulation of ubiquitin-dependent degradation of a set of methylated non-histone proteins, including SOX2, DNMT1 and E2F1. It acts as an adapter recruiting the CRL4-DCAF5 E3 ubiquitin ligase complex to methylated target proteins. Required for normal maturation of myeloid progenitor cells. The chain is Lethal(3)malignant brain tumor-like protein 3 from Homo sapiens (Human).